Reading from the N-terminus, the 255-residue chain is Hydroxyacylglutathione hydrolase (255 aa).

Zn(2+) is bound by residues His56, His58, Asp60, His61, His114, Asp133, and His171.

This sequence belongs to the metallo-beta-lactamase superfamily. Glyoxalase II family. As to quaternary structure, monomer. The cofactor is Zn(2+).

The catalysed reaction is an S-(2-hydroxyacyl)glutathione + H2O = a 2-hydroxy carboxylate + glutathione + H(+). It participates in secondary metabolite metabolism; methylglyoxal degradation; (R)-lactate from methylglyoxal: step 2/2. Thiolesterase that catalyzes the hydrolysis of S-D-lactoyl-glutathione to form glutathione and D-lactic acid. The sequence is that of Hydroxyacylglutathione hydrolase from Cereibacter sphaeroides (strain ATCC 17029 / ATH 2.4.9) (Rhodobacter sphaeroides).